The primary structure comprises 107 residues: Phosphoribosyl-ATP pyrophosphatase 1 (107 aa).

It belongs to the PRA-PH family.

Its subcellular location is the cytoplasm. The catalysed reaction is 1-(5-phospho-beta-D-ribosyl)-ATP + H2O = 1-(5-phospho-beta-D-ribosyl)-5'-AMP + diphosphate + H(+). The protein operates within amino-acid biosynthesis; L-histidine biosynthesis; L-histidine from 5-phospho-alpha-D-ribose 1-diphosphate: step 2/9. This chain is Phosphoribosyl-ATP pyrophosphatase 1 (hisE1), found in Rhodopseudomonas palustris (strain ATCC BAA-98 / CGA009).